A 113-amino-acid chain; its full sequence is Gas vesicle protein I2 (113 aa).

Residues 1 to 93 form a disordered region; the sequence is MTPTNRHTHG…TVPEQPTHAT (93 aa). Low complexity predominate over residues 11–22; it reads QNAQHARRNAQQ. Positions 52-63 are enriched in polar residues; sequence EQPTSDTTNPAA. Over residues 69-81 the composition is skewed to low complexity; the sequence is AQRTNAQNAARNA. The segment covering 82–93 has biased composition (polar residues); the sequence is HSTVPEQPTHAT.

It belongs to the gas vesicle GvpI family. GvpF to GvpM interact with each other in vitro, and may form multi-subunit complex(es). Interacts with GvpC and GvpO.

It is found in the gas vesicle. In terms of biological role, proteins GvpF to GvpM might be involved in nucleating gas vesicle formation. A minor component of the gas vesicle. Gas vesicles are hollow, gas filled proteinaceous nanostructures found in several microbial planktonic microorganisms. They allow positioning of halobacteria at the optimal depth for growth in the poorly aerated, shallow brine pools of their habitat. Functionally, expression of 2 c-vac DNA fragments containing 2 divergently transcribed regions (gvpE-gvpF-gvpG-gvpH-gvpI-gvpJ-gvpK-gvpL-gvpM and gvpA-gvpC-gvpN-gvpO) allows H.volcanii to produce gas vesicles. The polypeptide is Gas vesicle protein I2 (Halobacterium salinarum (strain ATCC 700922 / JCM 11081 / NRC-1) (Halobacterium halobium)).